The following is a 256-amino-acid chain: Inositol-1-monophosphatase (256 aa).

Residues Glu60, Asp77, Leu79, and Asp80 each coordinate Mg(2+). Glu60 provides a ligand contact to substrate. Substrate contacts are provided by residues 79 to 82, Arg178, and Asp207; that span reads LDGT. Asp207 is a binding site for Mg(2+).

Belongs to the inositol monophosphatase superfamily. Mg(2+) is required as a cofactor.

The enzyme catalyses a myo-inositol phosphate + H2O = myo-inositol + phosphate. In Caulobacter vibrioides (strain ATCC 19089 / CIP 103742 / CB 15) (Caulobacter crescentus), this protein is Inositol-1-monophosphatase (suhB).